The following is a 371-amino-acid chain: Histidinol-phosphate aminotransferase (371 aa).

Lys228 carries the N6-(pyridoxal phosphate)lysine modification.

It belongs to the class-II pyridoxal-phosphate-dependent aminotransferase family. Histidinol-phosphate aminotransferase subfamily. As to quaternary structure, homodimer. Pyridoxal 5'-phosphate is required as a cofactor.

The enzyme catalyses L-histidinol phosphate + 2-oxoglutarate = 3-(imidazol-4-yl)-2-oxopropyl phosphate + L-glutamate. The protein operates within amino-acid biosynthesis; L-histidine biosynthesis; L-histidine from 5-phospho-alpha-D-ribose 1-diphosphate: step 7/9. This Thermosynechococcus vestitus (strain NIES-2133 / IAM M-273 / BP-1) protein is Histidinol-phosphate aminotransferase.